A 130-amino-acid polypeptide reads, in one-letter code: Chaperone protein SycT (130 aa).

In terms of assembly, binds to YopT.

Functionally, functions as a specific chaperone for YopT. This is Chaperone protein SycT (sycT) from Yersinia enterocolitica.